A 494-amino-acid chain; its full sequence is Probable cytosol aminopeptidase (494 aa).

Mn(2+)-binding residues include Lys-264 and Asp-269. The active site involves Lys-276. Positions 287, 346, and 348 each coordinate Mn(2+). Residue Arg-350 is part of the active site.

This sequence belongs to the peptidase M17 family. It depends on Mn(2+) as a cofactor.

It localises to the cytoplasm. It carries out the reaction Release of an N-terminal amino acid, Xaa-|-Yaa-, in which Xaa is preferably Leu, but may be other amino acids including Pro although not Arg or Lys, and Yaa may be Pro. Amino acid amides and methyl esters are also readily hydrolyzed, but rates on arylamides are exceedingly low.. The enzyme catalyses Release of an N-terminal amino acid, preferentially leucine, but not glutamic or aspartic acids.. In terms of biological role, presumably involved in the processing and regular turnover of intracellular proteins. Catalyzes the removal of unsubstituted N-terminal amino acids from various peptides. This chain is Probable cytosol aminopeptidase (pepA), found in Pasteurella multocida (strain Pm70).